The following is a 125-amino-acid chain: MPTINQLVRKPRQLAVIKSKVPALDACPQKRGVCTRVYTTTPKKPNSALRKVAKVRLTNGFEVISYIGGEGHNLQEHSVVLIRGGRVKDLPGVRYHIVRGSLDLQGVKDRKQSRSKYGAKRPKKA.

The residue at position 89 (D89) is a 3-methylthioaspartic acid. The segment at 106 to 125 is disordered; it reads GVKDRKQSRSKYGAKRPKKA. Basic residues predominate over residues 113-125; that stretch reads SRSKYGAKRPKKA.

The protein belongs to the universal ribosomal protein uS12 family. Part of the 30S ribosomal subunit. Contacts proteins S8 and S17. May interact with IF1 in the 30S initiation complex.

With S4 and S5 plays an important role in translational accuracy. In terms of biological role, interacts with and stabilizes bases of the 16S rRNA that are involved in tRNA selection in the A site and with the mRNA backbone. Located at the interface of the 30S and 50S subunits, it traverses the body of the 30S subunit contacting proteins on the other side and probably holding the rRNA structure together. The combined cluster of proteins S8, S12 and S17 appears to hold together the shoulder and platform of the 30S subunit. The polypeptide is Small ribosomal subunit protein uS12 (Aromatoleum aromaticum (strain DSM 19018 / LMG 30748 / EbN1) (Azoarcus sp. (strain EbN1))).